A 132-amino-acid polypeptide reads, in one-letter code: Outer membrane protein assembly factor BamE (132 aa).

The first 16 residues, 1–16 (MQKLVLTLLVTSLLAG), serve as a signal peptide directing secretion. Cys-17 carries N-palmitoyl cysteine lipidation. Residue Cys-17 is the site of S-diacylglycerol cysteine attachment.

This sequence belongs to the BamE family. As to quaternary structure, part of the Bam complex.

The protein resides in the cell outer membrane. Functionally, part of the outer membrane protein assembly complex, which is involved in assembly and insertion of beta-barrel proteins into the outer membrane. The protein is Outer membrane protein assembly factor BamE of Acinetobacter pittii (strain PHEA-2).